The sequence spans 450 residues: Crinkler effector protein 63 (450 aa).

The first 17 residues, 1–17 (MVKLFCAIVGAAGSAFP), serve as a signal peptide directing secretion. The interval 18–55 (VDIDAGQSAGDLKDAIKAKNPATITCDAKDLQLSLAKT) is LQLFLAK domain. Positions 58–117 (GAWLPDDDQAALDLEDGKVHEDIQALIDGEKMKATWTIEDVLTANNMTKRKGRAPKSRQI) are DWL domain. N-linked (GlcNAc...) asparagine glycosylation occurs at Asn-103. The HVLVXXP motif signature appears at 118 to 124 (HVLVVVP). An effector domain region spans residues 125 to 450 (EGAFGSASET…RSIPTFSYFS (326 aa)). A Nuclear localization signal (NLS) motif is present at residues 218–224 (QRKRYRR). The N-linked (GlcNAc...) asparagine glycan is linked to Asn-342.

This sequence belongs to the Crinkler effector family. Forms a homodimer via an inverted association manner. Forms heterodimers with CRN79 and CRN115.

It is found in the secreted. It localises to the host nucleus. The protein resides in the host nucleoplasm. Secreted effector that, with CRN115, is critical to pathogenesis by modulating host defenses. Induces cell death in plant host cells. Suppresses callose deposition and affects expression of defense-related genes including two salicylic acid (SA) signal-induced and antimicrobial PR genes (PR1 and PR2), and genes involved in jasmonic acid (JA)/ethylene (ET)-mediated defense pathway (ERF1, ORA59, PDF1.2). CRN115 and CRN63 may share the same molecular host targets that are involved in the cell death signal transduction pathway and that their differential activities are dependent on plant nuclear localization or not. Does not affect MAPK activation and BIK1 phosphorylation and acts downstream of the MAPK cascades in PTI signaling. The sequence is that of Crinkler effector protein 63 from Phytophthora sojae (strain P6497) (Soybean stem and root rot agent).